The chain runs to 309 residues: Dihydroorotate dehydrogenase B (NAD(+)), catalytic subunit (309 aa).

FMN contacts are provided by residues S21 and 45–46 (KA). Substrate-binding positions include K45 and 69-73 (NAIGL). FMN is bound by residues N99 and N127. Residue N127 participates in substrate binding. The active-site Nucleophile is C130. FMN is bound by residues K165 and I191. 192-193 (NT) serves as a coordination point for substrate. Residues G217, 243–244 (GG), and 265–266 (GT) contribute to the FMN site.

This sequence belongs to the dihydroorotate dehydrogenase family. Type 1 subfamily. In terms of assembly, heterotetramer of 2 PyrK and 2 PyrD type B subunits. FMN serves as cofactor.

It is found in the cytoplasm. The catalysed reaction is (S)-dihydroorotate + NAD(+) = orotate + NADH + H(+). Its pathway is pyrimidine metabolism; UMP biosynthesis via de novo pathway; orotate from (S)-dihydroorotate (NAD(+) route): step 1/1. Its function is as follows. Catalyzes the conversion of dihydroorotate to orotate with NAD(+) as electron acceptor. The protein is Dihydroorotate dehydrogenase B (NAD(+)), catalytic subunit (pyrD) of Bacillus cereus (strain ATCC 14579 / DSM 31 / CCUG 7414 / JCM 2152 / NBRC 15305 / NCIMB 9373 / NCTC 2599 / NRRL B-3711).